A 363-amino-acid polypeptide reads, in one-letter code: MSGLFSSVGRKGLFLIDPEKAHGLSVAALKSGFLPTCMVPHDPRLQQTVAGLVFPNPLGMAAGYDKNAEVPGPLLRLGFGFTEIGTVTPRAQSGNPKPRIFRLVEDEGVINRLGFNNEGHAAALERLTQARLRGIVGVNIGANKDSEDRIADYVQGIEAFYAVASYFTVNISSPNTPGLRDLQARESLAALLTAVLERRKTEAERLGKRIPIFLKIAPDLTEEGLDDVAEEALAHDLDGLIVSNTTLSREGLRPGPHRGEAGGLSGKPLFELSTTVLAKMRRRVGANLPIIGVGGVSSAETALEKVRAGADLVQLYSCMVYEGPGLPSAIVKGMSKLVAREGVETIRDLRDSAVDRWADRKLG.

FMN is bound by residues 62–66 and Thr86; that span reads AGYDK. Lys66 serves as a coordination point for substrate. 111 to 115 lines the substrate pocket; sequence NRLGF. Residues Asn139 and Asn170 each contribute to the FMN site. Asn170 provides a ligand contact to substrate. Ser173 functions as the Nucleophile in the catalytic mechanism. Asn175 contributes to the substrate binding site. Residues Lys215 and Ser243 each contribute to the FMN site. 244 to 245 lines the substrate pocket; it reads NT. Residues Gly266, Gly295, and 316–317 contribute to the FMN site; that span reads YS.

Belongs to the dihydroorotate dehydrogenase family. Type 2 subfamily. Monomer. The cofactor is FMN.

Its subcellular location is the cell membrane. The enzyme catalyses (S)-dihydroorotate + a quinone = orotate + a quinol. It functions in the pathway pyrimidine metabolism; UMP biosynthesis via de novo pathway; orotate from (S)-dihydroorotate (quinone route): step 1/1. Functionally, catalyzes the conversion of dihydroorotate to orotate with quinone as electron acceptor. The protein is Dihydroorotate dehydrogenase (quinone) of Agrobacterium fabrum (strain C58 / ATCC 33970) (Agrobacterium tumefaciens (strain C58)).